The chain runs to 488 residues: MGADAAIGQIKDAKKRYAAGVLKYAQMGYWDGDYQPKDTDVLALFRITPQDGVDAVEAAAAVAGESSTATWTVVWTDRLTAADMYRAKAYKVEPVPGQPGQYFCWVAYDLDLFEEGSIANLTASIIGNVFSFKPLKACRLEDMRLPVAYVKTFRGPPTGIVVERERLDKFGRPLLGATTKPKLGLSGKNYGRVVYEGLKGGLDFVKDDENINSQPFMHWRDRFLYCMEAVNKAQAETGEVKGHYLNITAGTMEEMYRRAEFAKELGSVVVMVDLIVGWTAIQSISNWCRENDVLLHMHRAGHGTYTRQKGHGISFRVIAKWLRLAGVDHLHTGTAVGKLEGDPMTVQGYYNVCRETVTKTDYTRGIFFDQDWAGLRKVMPVASGGIHAGQMHQLIDLFGEDVVLQFGGGTIGHPDGIQAGAIANRVALETMILARNEGRDIKNEGPEILIEAAKWCRPLRAALDTWGEVTFNYASTDTSDFVPTASVA.

Residues Asn-128 and Thr-178 each coordinate substrate. The active-site Proton acceptor is the Lys-180. Lys-182 is a substrate binding site. Residues Lys-206, Asp-208, and Glu-209 each contribute to the Mg(2+) site. Position 206 is an N6-carboxylysine (Lys-206). His-298 acts as the Proton acceptor in catalysis. 3 residues coordinate substrate: Arg-299, His-331, and Ser-383.

It belongs to the RuBisCO large chain family. Type I subfamily. Heterohexadecamer of 8 large chains and 8 small chains. Mg(2+) is required as a cofactor.

The enzyme catalyses 2 (2R)-3-phosphoglycerate + 2 H(+) = D-ribulose 1,5-bisphosphate + CO2 + H2O. It carries out the reaction D-ribulose 1,5-bisphosphate + O2 = 2-phosphoglycolate + (2R)-3-phosphoglycerate + 2 H(+). Functionally, ruBisCO catalyzes two reactions: the carboxylation of D-ribulose 1,5-bisphosphate, the primary event in carbon dioxide fixation, as well as the oxidative fragmentation of the pentose substrate. Both reactions occur simultaneously and in competition at the same active site. The protein is Ribulose bisphosphate carboxylase large chain of Xanthobacter autotrophicus (strain ATCC BAA-1158 / Py2).